We begin with the raw amino-acid sequence, 70 residues long: Large ribosomal subunit protein uL29 (70 aa).

It belongs to the universal ribosomal protein uL29 family.

In Clostridium botulinum (strain Alaska E43 / Type E3), this protein is Large ribosomal subunit protein uL29.